The primary structure comprises 39 residues: Potassium channel toxin alpha-KTx 2.5 (39 aa).

3 disulfide bridges follow: C7–C29, C13–C34, and C17–C36.

It belongs to the short scorpion toxin superfamily. Potassium channel inhibitor family. Alpha-KTx 02 subfamily. In terms of tissue distribution, expressed by the venom gland.

Its subcellular location is the secreted. Potent selective inhibitor of Kv1.1/KCNA1, Kv1.2/KCNA2, Kv1.3/KCNA3 voltage-gated potassium channels. Weak inhibitor of Kv1.6/KCNA6 potassium channel. It also shows a weak interaction with nicotinic acetylcholine receptors (nAChR), suggesting it may weakly inhibit it. This Centruroides limbatus (Bark scorpion) protein is Potassium channel toxin alpha-KTx 2.5.